Consider the following 200-residue polypeptide: Small ribosomal subunit protein uS4 (200 aa).

Residues 22 to 43 (TGKELERRPYAPGQHGPTQRKK) are disordered. An S4 RNA-binding domain is found at 92–170 (QRLDNIVYRL…VPEYVTFDAE (79 aa)).

The protein belongs to the universal ribosomal protein uS4 family. In terms of assembly, part of the 30S ribosomal subunit. Contacts protein S5. The interaction surface between S4 and S5 is involved in control of translational fidelity.

In terms of biological role, one of the primary rRNA binding proteins, it binds directly to 16S rRNA where it nucleates assembly of the body of the 30S subunit. With S5 and S12 plays an important role in translational accuracy. The protein is Small ribosomal subunit protein uS4 of Listeria welshimeri serovar 6b (strain ATCC 35897 / DSM 20650 / CCUG 15529 / CIP 8149 / NCTC 11857 / SLCC 5334 / V8).